The following is an 800-amino-acid chain: Protocadherin beta-10 (800 aa).

Residues 1 to 26 (MAVRELCFPRQRQVLFLFLFWGVSLA) form the signal peptide. Residues 27–692 (GSGFGRYSVT…AEADLLTVYL (666 aa)) lie on the Extracellular side of the membrane. 5 consecutive Cadherin domains span residues 35–133 (VTEE…APVF), 138–242 (TVLK…APQF), 247–347 (YETQ…PPEL), 352–451 (FSNS…APAF), and 456–561 (YTLF…SPFV). 2 N-linked (GlcNAc...) asparagine glycosylation sites follow: Asn169 and Asn181. 2 N-linked (GlcNAc...) asparagine glycosylation sites follow: Asn418 and Asn436. A glycan (N-linked (GlcNAc...) asparagine) is linked at Asn567. The 104-residue stretch at 568 to 671 (GSAPCTELVP…LVDGFSQPYL (104 aa)) folds into the Cadherin 6 domain. The chain crosses the membrane as a helical span at residues 693-713 (VVALASVSSLFLLSVLLFVAV). Topologically, residues 714 to 800 (RLCRRSRAAS…FRNSFGFNIQ (87 aa)) are cytoplasmic.

Its subcellular location is the cell membrane. Functionally, potential calcium-dependent cell-adhesion protein. May be involved in the establishment and maintenance of specific neuronal connections in the brain. The protein is Protocadherin beta-10 (PCDHB10) of Homo sapiens (Human).